Here is a 158-residue protein sequence, read N- to C-terminus: NAD(P)H-quinone oxidoreductase subunit N (158 aa).

The protein belongs to the complex I NdhN subunit family. In terms of assembly, NDH-1 can be composed of about 15 different subunits; different subcomplexes with different compositions have been identified which probably have different functions.

It localises to the cellular thylakoid membrane. It carries out the reaction a plastoquinone + NADH + (n+1) H(+)(in) = a plastoquinol + NAD(+) + n H(+)(out). The catalysed reaction is a plastoquinone + NADPH + (n+1) H(+)(in) = a plastoquinol + NADP(+) + n H(+)(out). NDH-1 shuttles electrons from an unknown electron donor, via FMN and iron-sulfur (Fe-S) centers, to quinones in the respiratory and/or the photosynthetic chain. The immediate electron acceptor for the enzyme in this species is believed to be plastoquinone. Couples the redox reaction to proton translocation, and thus conserves the redox energy in a proton gradient. Cyanobacterial NDH-1 also plays a role in inorganic carbon-concentration. The sequence is that of NAD(P)H-quinone oxidoreductase subunit N from Trichodesmium erythraeum (strain IMS101).